Consider the following 307-residue polypeptide: Aspartate carbamoyltransferase catalytic subunit (307 aa).

2 residues coordinate carbamoyl phosphate: arginine 54 and threonine 55. An L-aspartate-binding site is contributed by lysine 83. Carbamoyl phosphate-binding residues include arginine 104, histidine 132, and glutamine 135. Positions 165 and 228 each coordinate L-aspartate. Carbamoyl phosphate contacts are provided by leucine 267 and proline 268.

It belongs to the aspartate/ornithine carbamoyltransferase superfamily. ATCase family. In terms of assembly, heterododecamer (2C3:3R2) of six catalytic PyrB chains organized as two trimers (C3), and six regulatory PyrI chains organized as three dimers (R2).

The catalysed reaction is carbamoyl phosphate + L-aspartate = N-carbamoyl-L-aspartate + phosphate + H(+). It functions in the pathway pyrimidine metabolism; UMP biosynthesis via de novo pathway; (S)-dihydroorotate from bicarbonate: step 2/3. Catalyzes the condensation of carbamoyl phosphate and aspartate to form carbamoyl aspartate and inorganic phosphate, the committed step in the de novo pyrimidine nucleotide biosynthesis pathway. The chain is Aspartate carbamoyltransferase catalytic subunit from Clostridium botulinum (strain Eklund 17B / Type B).